Here is a 207-residue protein sequence, read N- to C-terminus: LexA repressor (207 aa).

Positions 28–48 (RAEISRELGFKSANAAEEHLK) form a DNA-binding region, H-T-H motif. Active-site for autocatalytic cleavage activity residues include serine 123 and lysine 160.

This sequence belongs to the peptidase S24 family. As to quaternary structure, homodimer.

The enzyme catalyses Hydrolysis of Ala-|-Gly bond in repressor LexA.. In terms of biological role, represses a number of genes involved in the response to DNA damage (SOS response), including recA and lexA. In the presence of single-stranded DNA, RecA interacts with LexA causing an autocatalytic cleavage which disrupts the DNA-binding part of LexA, leading to derepression of the SOS regulon and eventually DNA repair. The protein is LexA repressor of Haemophilus influenzae (strain 86-028NP).